The following is a 340-amino-acid chain: MTQAQTAATVQPDAIPVAAPVSQRWRVADVVALFELPFNDLLFRAQQVHREHFDANAVQLSTLLSIKTGGCEEDCGYCSQSSHHDTGLKAEKLMDVDAVLDAARAAKANGASRFCMGAAWRNPKERHMPALTEMVRGVKELGLETCMTLGMLEDEQAQELASAGLDYYNHNLDTSPEFYGQVISTRTYQDRLDTLDRVRDAGINVCCGGIIGMGESRRERAGLISQLANLNPYPDSVPINNLVAIEGTPLEGTAPLDPFEFVRTIAVARITMPKAVVRLSAGREQLDDGLQAMCFLAGANSMFYGDQLLTTSNPQSQKDRALFERLGIRSSDADAMSANA.

In terms of domain architecture, Radical SAM core spans 56 to 283 (NAVQLSTLLS…KAVVRLSAGR (228 aa)). The [4Fe-4S] cluster site is built by cysteine 71, cysteine 75, and cysteine 78. 4 residues coordinate [2Fe-2S] cluster: cysteine 115, cysteine 146, cysteine 206, and arginine 278.

Belongs to the radical SAM superfamily. Biotin synthase family. Homodimer. [4Fe-4S] cluster is required as a cofactor. The cofactor is [2Fe-2S] cluster.

It catalyses the reaction (4R,5S)-dethiobiotin + (sulfur carrier)-SH + 2 reduced [2Fe-2S]-[ferredoxin] + 2 S-adenosyl-L-methionine = (sulfur carrier)-H + biotin + 2 5'-deoxyadenosine + 2 L-methionine + 2 oxidized [2Fe-2S]-[ferredoxin]. Its pathway is cofactor biosynthesis; biotin biosynthesis; biotin from 7,8-diaminononanoate: step 2/2. Catalyzes the conversion of dethiobiotin (DTB) to biotin by the insertion of a sulfur atom into dethiobiotin via a radical-based mechanism. The polypeptide is Biotin synthase (Burkholderia lata (strain ATCC 17760 / DSM 23089 / LMG 22485 / NCIMB 9086 / R18194 / 383)).